The primary structure comprises 166 residues: NAD(P)H-quinone oxidoreductase subunit I, chloroplastic (166 aa).

2 consecutive 4Fe-4S ferredoxin-type domains span residues 55–84 (GRIHFEFDKCIACEVCVRVCPIDLPVVDWK) and 95–124 (LNYSIDFGICIFCGNCVEYCPTNCLSMTEE). Residues Cys-64, Cys-67, Cys-70, Cys-74, Cys-104, Cys-107, Cys-110, and Cys-114 each contribute to the [4Fe-4S] cluster site.

The protein belongs to the complex I 23 kDa subunit family. NDH is composed of at least 16 different subunits, 5 of which are encoded in the nucleus. [4Fe-4S] cluster serves as cofactor.

The protein localises to the plastid. Its subcellular location is the chloroplast thylakoid membrane. The catalysed reaction is a plastoquinone + NADH + (n+1) H(+)(in) = a plastoquinol + NAD(+) + n H(+)(out). It carries out the reaction a plastoquinone + NADPH + (n+1) H(+)(in) = a plastoquinol + NADP(+) + n H(+)(out). Functionally, NDH shuttles electrons from NAD(P)H:plastoquinone, via FMN and iron-sulfur (Fe-S) centers, to quinones in the photosynthetic chain and possibly in a chloroplast respiratory chain. The immediate electron acceptor for the enzyme in this species is believed to be plastoquinone. Couples the redox reaction to proton translocation, and thus conserves the redox energy in a proton gradient. The polypeptide is NAD(P)H-quinone oxidoreductase subunit I, chloroplastic (Lasianthaea macrocephala (Lipochaeta macrocephala)).